The primary structure comprises 494 residues: NADH-quinone oxidoreductase subunit N 2 (494 aa).

Helical transmembrane passes span 14 to 34 (LPQI…GMLL), 45 to 65 (IAML…PLTA), 82 to 102 (VVQV…GSVL), 116 to 136 (IGEF…LVST), 139 to 159 (LLLI…LTAF), 174 to 194 (FLFG…LYGV), 214 to 234 (LLVA…AAPF), 262 to 282 (FFVF…NAAW), 289 to 309 (WMPI…LAAL), 317 to 337 (LLAY…IAHT), 344 to 364 (LLYY…VLAI), 388 to 408 (ACLL…GFFA), 422 to 442 (AFGL…ALFY), and 470 to 490 (ITLL…NLLM).

It belongs to the complex I subunit 2 family. NDH-1 is composed of 14 different subunits. Subunits NuoA, H, J, K, L, M, N constitute the membrane sector of the complex.

The protein localises to the cell inner membrane. It catalyses the reaction a quinone + NADH + 5 H(+)(in) = a quinol + NAD(+) + 4 H(+)(out). NDH-1 shuttles electrons from NADH, via FMN and iron-sulfur (Fe-S) centers, to quinones in the respiratory chain. The immediate electron acceptor for the enzyme in this species is believed to be ubiquinone. Couples the redox reaction to proton translocation (for every two electrons transferred, four hydrogen ions are translocated across the cytoplasmic membrane), and thus conserves the redox energy in a proton gradient. The chain is NADH-quinone oxidoreductase subunit N 2 from Acidobacterium capsulatum (strain ATCC 51196 / DSM 11244 / BCRC 80197 / JCM 7670 / NBRC 15755 / NCIMB 13165 / 161).